The chain runs to 485 residues: G2/mitotic-specific cyclin-A1 (485 aa).

The interval 1–24 (MRSALSLKPSNGNAAKSQAVNNKN) is disordered. A compositionally biased stretch (polar residues) spans 8–24 (KPSNGNAAKSQAVNNKN).

This sequence belongs to the cyclin family. Cyclin AB subfamily. As to expression, expressed in the cell lineages ABarp, C and E as well as the NSM neuroblasts.

Its function is as follows. Involved in the control of the cell cycle after S phase. May bind to and activate cdk-1 and/or cdk-2 to promote cell cycle progression. Necessary for embryogenesis. The chain is G2/mitotic-specific cyclin-A1 (cya-1) from Caenorhabditis elegans.